The primary structure comprises 488 residues: 26S proteasome non-ATPase regulatory subunit 3 homolog A (488 aa).

One can recognise a PCI domain in the interval 240–421 (CRYLFYLGKI…GCMVSKETGD (182 aa)). A disordered region spans residues 451–488 (RFPPNTHKEKESDEKRRERKQQEEELAKHMAEEDDDDF). The span at 456-481 (THKEKESDEKRRERKQQEEELAKHMA) shows a compositional bias: basic and acidic residues.

It belongs to the proteasome subunit S3 family. As to quaternary structure, component of the 19S regulatory particle (RP/PA700) lid subcomplex of the 26S proteasome. The 26S proteasome is composed of a core protease (CP), known as the 20S proteasome, capped at one or both ends by the 19S regulatory particle (RP/PA700). The RP/PA700 complex is composed of at least 17 different subunits in two subcomplexes, the base and the lid, which form the portions proximal and distal to the 20S proteolytic core, respectively. Interacts with UCH1 and UCH2. Ubiquitous with highest expression in flowers.

Acts as a regulatory subunit of the 26 proteasome which is involved in the ATP-dependent degradation of ubiquitinated proteins. In Arabidopsis thaliana (Mouse-ear cress), this protein is 26S proteasome non-ATPase regulatory subunit 3 homolog A.